Reading from the N-terminus, the 156-residue chain is Ribosomal RNA large subunit methyltransferase H (156 aa).

S-adenosyl-L-methionine-binding positions include Leu-73, Gly-104, and 123–128 (LGALTL).

Belongs to the RNA methyltransferase RlmH family. In terms of assembly, homodimer.

Its subcellular location is the cytoplasm. The enzyme catalyses pseudouridine(1915) in 23S rRNA + S-adenosyl-L-methionine = N(3)-methylpseudouridine(1915) in 23S rRNA + S-adenosyl-L-homocysteine + H(+). Its function is as follows. Specifically methylates the pseudouridine at position 1915 (m3Psi1915) in 23S rRNA. This chain is Ribosomal RNA large subunit methyltransferase H, found in Dichelobacter nodosus (strain VCS1703A).